The following is a 306-amino-acid chain: UDP-3-O-acyl-N-acetylglucosamine deacetylase (306 aa).

Residues H79, H238, and D242 each coordinate Zn(2+). The active-site Proton donor is the H265.

Belongs to the LpxC family. It depends on Zn(2+) as a cofactor.

The catalysed reaction is a UDP-3-O-[(3R)-3-hydroxyacyl]-N-acetyl-alpha-D-glucosamine + H2O = a UDP-3-O-[(3R)-3-hydroxyacyl]-alpha-D-glucosamine + acetate. It functions in the pathway glycolipid biosynthesis; lipid IV(A) biosynthesis; lipid IV(A) from (3R)-3-hydroxytetradecanoyl-[acyl-carrier-protein] and UDP-N-acetyl-alpha-D-glucosamine: step 2/6. Functionally, catalyzes the hydrolysis of UDP-3-O-myristoyl-N-acetylglucosamine to form UDP-3-O-myristoylglucosamine and acetate, the committed step in lipid A biosynthesis. This Shewanella baltica (strain OS223) protein is UDP-3-O-acyl-N-acetylglucosamine deacetylase.